Reading from the N-terminus, the 597-residue chain is Large ribosomal subunit assembly factor BipA (597 aa).

Positions 3–198 (LPIRNVAIIA…AILHHVPPPA (196 aa)) constitute a tr-type G domain. GTP is bound by residues 15–20 (DHGKTT) and 128–131 (NKID).

This sequence belongs to the TRAFAC class translation factor GTPase superfamily. Classic translation factor GTPase family. BipA subfamily. As to quaternary structure, monomer.

It is found in the cytoplasm. The catalysed reaction is GTP + H2O = GDP + phosphate + H(+). Its function is as follows. A 50S ribosomal subunit assembly protein with GTPase activity, required for 50S subunit assembly at low temperatures, may also play a role in translation. Binds GTP and analogs. Binds the 70S ribosome between the 30S and 50S subunits, in a similar position as ribosome-bound EF-G; it contacts a number of ribosomal proteins, both rRNAs and the A-site tRNA. The sequence is that of Large ribosomal subunit assembly factor BipA from Synechocystis sp. (strain ATCC 27184 / PCC 6803 / Kazusa).